Reading from the N-terminus, the 422-residue chain is Exodeoxyribonuclease 7 large subunit (422 aa).

This sequence belongs to the XseA family. In terms of assembly, heterooligomer composed of large and small subunits.

The protein resides in the cytoplasm. The catalysed reaction is Exonucleolytic cleavage in either 5'- to 3'- or 3'- to 5'-direction to yield nucleoside 5'-phosphates.. Functionally, bidirectionally degrades single-stranded DNA into large acid-insoluble oligonucleotides, which are then degraded further into small acid-soluble oligonucleotides. The chain is Exodeoxyribonuclease 7 large subunit from Leptospira interrogans serogroup Icterohaemorrhagiae serovar copenhageni (strain Fiocruz L1-130).